A 337-amino-acid polypeptide reads, in one-letter code: MTYAVEFDNVSRLYGDVRAVDGVSIAIKDGEFFSMLGPSGSGKTTCLRLIAGFEQLSGGAISIFGKPASNLPPWERDVNTVFQDYALFPHMSILDNVAYGLMVKGVNKKQRHAMAQEALEKVALGFVHQRKPSQLSGGQRQRVAIARALVNEPRVLLLDEPLGALDLKLREQMQLELKKLQQSLGITFIFVTHDQGEALSMSDRVAVFNNGRIEQVDSPRDLYMRPRTPFVAGFVGTSNVFDGLMAEKLCGMTGSFALRPEHIRLNTPGELQANGTIQAVQYQGAATRFELKLNGGEKLLVSQANMTGEELPATLTPGQQVMVSWSRDVMVPLVEER.

Residues Val5–Val235 form the ABC transporter domain. Gly37–Thr44 lines the ATP pocket.

The protein belongs to the ABC transporter superfamily.

Its function is as follows. Probably part of the ABC transporter complex YdcSTUV. Probably responsible for energy coupling to the transport system. This is an uncharacterized protein from Escherichia coli (strain K12).